We begin with the raw amino-acid sequence, 211 residues long: Protein GrpE (211 aa).

Over residues 1–13 the composition is skewed to basic and acidic residues; that stretch reads MVDKDEEQIKQNV. The tract at residues 1–38 is disordered; the sequence is MVDKDEEQIKQNVEEDLSSTVEQTGEENIEFPSAPNHP.

This sequence belongs to the GrpE family. Homodimer.

Its subcellular location is the cytoplasm. In terms of biological role, participates actively in the response to hyperosmotic and heat shock by preventing the aggregation of stress-denatured proteins, in association with DnaK and GrpE. It is the nucleotide exchange factor for DnaK and may function as a thermosensor. Unfolded proteins bind initially to DnaJ; upon interaction with the DnaJ-bound protein, DnaK hydrolyzes its bound ATP, resulting in the formation of a stable complex. GrpE releases ADP from DnaK; ATP binding to DnaK triggers the release of the substrate protein, thus completing the reaction cycle. Several rounds of ATP-dependent interactions between DnaJ, DnaK and GrpE are required for fully efficient folding. The polypeptide is Protein GrpE (Protochlamydia amoebophila (strain UWE25)).